The following is a 122-amino-acid chain: Small ribosomal subunit protein bS6 (122 aa).

The protein belongs to the bacterial ribosomal protein bS6 family.

Binds together with bS18 to 16S ribosomal RNA. The protein is Small ribosomal subunit protein bS6 of Vibrio cholerae serotype O1 (strain ATCC 39541 / Classical Ogawa 395 / O395).